Reading from the N-terminus, the 106-residue chain is NADH-quinone oxidoreductase subunit K (106 aa).

Transmembrane regions (helical) follow at residues 10–30 (IHYY…GVMV), 35–55 (VLIF…FVTF), and 67–87 (VVFF…AIVI).

Belongs to the complex I subunit 4L family. In terms of assembly, NDH-1 is composed of 14 different subunits. Subunits NuoA, H, J, K, L, M, N constitute the membrane sector of the complex.

Its subcellular location is the cell inner membrane. The catalysed reaction is a quinone + NADH + 5 H(+)(in) = a quinol + NAD(+) + 4 H(+)(out). Functionally, NDH-1 shuttles electrons from NADH, via FMN and iron-sulfur (Fe-S) centers, to quinones in the respiratory chain. The immediate electron acceptor for the enzyme in this species is believed to be ubiquinone. Couples the redox reaction to proton translocation (for every two electrons transferred, four hydrogen ions are translocated across the cytoplasmic membrane), and thus conserves the redox energy in a proton gradient. The protein is NADH-quinone oxidoreductase subunit K of Leptospira borgpetersenii serovar Hardjo-bovis (strain JB197).